Here is a 474-residue protein sequence, read N- to C-terminus: Bifunctional protein HldE (474 aa).

Positions 1–318 (MKVTLPDFNK…ENAIRGRADN (318 aa)) are ribokinase. 195 to 198 (NMSE) provides a ligand contact to ATP. Asp-264 is a catalytic residue. Residues 344–474 (MTNGCFDILH…TNIINAIKKK (131 aa)) are cytidylyltransferase.

It in the N-terminal section; belongs to the carbohydrate kinase PfkB family. The protein in the C-terminal section; belongs to the cytidylyltransferase family. Homodimer.

It catalyses the reaction D-glycero-beta-D-manno-heptose 7-phosphate + ATP = D-glycero-beta-D-manno-heptose 1,7-bisphosphate + ADP + H(+). The enzyme catalyses D-glycero-beta-D-manno-heptose 1-phosphate + ATP + H(+) = ADP-D-glycero-beta-D-manno-heptose + diphosphate. It functions in the pathway nucleotide-sugar biosynthesis; ADP-L-glycero-beta-D-manno-heptose biosynthesis; ADP-L-glycero-beta-D-manno-heptose from D-glycero-beta-D-manno-heptose 7-phosphate: step 1/4. The protein operates within nucleotide-sugar biosynthesis; ADP-L-glycero-beta-D-manno-heptose biosynthesis; ADP-L-glycero-beta-D-manno-heptose from D-glycero-beta-D-manno-heptose 7-phosphate: step 3/4. Catalyzes the phosphorylation of D-glycero-D-manno-heptose 7-phosphate at the C-1 position to selectively form D-glycero-beta-D-manno-heptose-1,7-bisphosphate. In terms of biological role, catalyzes the ADP transfer from ATP to D-glycero-beta-D-manno-heptose 1-phosphate, yielding ADP-D-glycero-beta-D-manno-heptose. The protein is Bifunctional protein HldE of Proteus mirabilis (strain HI4320).